We begin with the raw amino-acid sequence, 123 residues long: Large ribosomal subunit protein uL14 (123 aa).

This sequence belongs to the universal ribosomal protein uL14 family. Part of the 50S ribosomal subunit. Forms a cluster with proteins L3 and L19. In the 70S ribosome, L14 and L19 interact and together make contacts with the 16S rRNA in bridges B5 and B8.

In terms of biological role, binds to 23S rRNA. Forms part of two intersubunit bridges in the 70S ribosome. The polypeptide is Large ribosomal subunit protein uL14 (Chromohalobacter salexigens (strain ATCC BAA-138 / DSM 3043 / CIP 106854 / NCIMB 13768 / 1H11)).